The chain runs to 313 residues: Ribosomal RNA small subunit methyltransferase H (313 aa).

Residues 35-37 (GGH), Asp55, Phe79, Asp101, and Gln108 contribute to the S-adenosyl-L-methionine site.

It belongs to the methyltransferase superfamily. RsmH family.

It localises to the cytoplasm. It carries out the reaction cytidine(1402) in 16S rRNA + S-adenosyl-L-methionine = N(4)-methylcytidine(1402) in 16S rRNA + S-adenosyl-L-homocysteine + H(+). Its function is as follows. Specifically methylates the N4 position of cytidine in position 1402 (C1402) of 16S rRNA. In Klebsiella pneumoniae subsp. pneumoniae (strain ATCC 700721 / MGH 78578), this protein is Ribosomal RNA small subunit methyltransferase H.